Here is a 631-residue protein sequence, read N- to C-terminus: Mu-like prophage FluMu protein gp42 (631 aa).

A run of 2 helical transmembrane segments spans residues Leu56–Gly76 and Gly385–Val405. Residues Ile425 to Ser453 are disordered. The span at Lys434–Gly449 shows a compositional bias: basic residues. 3 consecutive transmembrane segments (helical) span residues Val455 to Ala475, Ser495 to Met515, and Ala543 to Gly563.

The protein to phage Mu protein gp42.

Its subcellular location is the cell membrane. This is Mu-like prophage FluMu protein gp42 from Haemophilus influenzae (strain ATCC 51907 / DSM 11121 / KW20 / Rd).